A 999-amino-acid chain; its full sequence is Sarcoplasmic/endoplasmic reticulum calcium ATPase 3 (999 aa).

The Cytoplasmic portion of the chain corresponds to 1–48; sequence MEAAHSVPVQDVLSRFGVAESCGLSPEQVRRNREKYGPNELPAEERKS. Residues 49 to 69 traverse the membrane as a helical segment; it reads LWELVLEQFEDLLVRILLMAA. Residues 70-89 are Lumenal-facing; sequence FLSFILAWFEEGEESTTAFV. A helical transmembrane segment spans residues 90–110; it reads EPIVIIMILIANAVVGVWQER. The Cytoplasmic portion of the chain corresponds to 111-253; the sequence is NAESAIEALK…PEKTPLQQKL (143 aa). Residues 254 to 273 traverse the membrane as a helical segment; the sequence is DEFSQQLSKVIFLVCIAVWV. Topologically, residues 274-295 are lumenal; the sequence is INISHFSDPVHGGSWFRGAIYY. The helical transmembrane segment at 296–313 threads the bilayer; it reads FKTSVALAVAAIPEGLPA. Ca(2+) is bound by residues valine 304, alanine 305, isoleucine 307, and glutamate 309. At 314–757 the chain is on the cytoplasmic side; it reads VITTCLALGT…EEGRAIYNNM (444 aa). The active-site 4-aspartylphosphate intermediate is aspartate 351. Mg(2+) contacts are provided by aspartate 351 and threonine 353. Threonine 353 is a binding site for ATP. An interaction with phospholamban 1 region spans residues 370 to 400; sequence EKVEGTQCSLHEFSITGSTYAPEGQILKDEK. Positions 442, 489, 515, 560, 625, 626, 627, 678, and 684 each coordinate ATP. Aspartate 703 contacts Mg(2+). Asparagine 706 serves as a coordination point for ATP. A helical membrane pass occupies residues 758-777; that stretch reads KQFIRYLISSNVGEVVCIFL. The Ca(2+) site is built by asparagine 768 and glutamate 771. Topologically, residues 778–787 are lumenal; the sequence is TAILGLPEAL. A helical transmembrane segment spans residues 788-808; it reads IPVQLLWVNLVTDGLPATALG. Residues 788-808 are interaction with phospholamban 2; that stretch reads IPVQLLWVNLVTDGLPATALG. Residues asparagine 796, threonine 799, and aspartate 800 each contribute to the Ca(2+) site. Residues 809 to 828 lie on the Cytoplasmic side of the membrane; it reads FNPPDLDIMDKLPRNPKEPL. Residues 829–851 traverse the membrane as a helical segment; it reads ISGWLFFRYLAIGVYVGLATVGA. The Lumenal portion of the chain corresponds to 852-897; that stretch reads ATWWFLYDAEGPQVSFHQLRNFMRCTEDNPIFEGVNCEIFESRYPT. A helical transmembrane segment spans residues 898-917; it reads TMALSVLVTIEMCNALNSVS. Glutamate 908 serves as a coordination point for Ca(2+). Topologically, residues 918–930 are cytoplasmic; it reads ENQSLLRMPPWLN. The chain crosses the membrane as a helical span at residues 931 to 949; that stretch reads IWLLGAIVMSMALHFFILY. The Lumenal portion of the chain corresponds to 950–964; the sequence is VKPMPLIFQVTPLSW. The helical transmembrane segment at 965 to 985 threads the bilayer; sequence PQWVVVLKISLPVILLDEGLK. The Cytoplasmic portion of the chain corresponds to 986–999; the sequence is YLSRNHLEGEEDKK.

Belongs to the cation transport ATPase (P-type) (TC 3.A.3) family. Type IIA subfamily. In terms of assembly, interacts with sarcolipin (SLN). Interacts with phospholamban (PLN). Interacts with myoregulin (MRLN). Interacts with DWORF. It depends on Mg(2+) as a cofactor. In terms of tissue distribution, found in spleen, lung, intestine and brain.

The protein resides in the endoplasmic reticulum membrane. It localises to the sarcoplasmic reticulum membrane. The enzyme catalyses Ca(2+)(in) + ATP + H2O = Ca(2+)(out) + ADP + phosphate + H(+). With respect to regulation, inhibited by sarcolipin (SLN), phospholamban (PLN) and myoregulin (MRLN). Enhanced by DWORF; DWORF increases activity by displacing sarcolipin (SLN), phospholamban (PLN) and myoregulin (MRLN). In terms of biological role, this magnesium-dependent enzyme catalyzes the hydrolysis of ATP coupled with the transport of calcium. Transports calcium ions from the cytosol into the sarcoplasmic/endoplasmic reticulum lumen. Contributes to calcium sequestration involved in muscular excitation/contraction. This Gallus gallus (Chicken) protein is Sarcoplasmic/endoplasmic reticulum calcium ATPase 3 (ATP2A3).